A 371-amino-acid polypeptide reads, in one-letter code: Putative glutamate--cysteine ligase 2 (371 aa).

It belongs to the glutamate--cysteine ligase type 2 family. YbdK subfamily.

It carries out the reaction L-cysteine + L-glutamate + ATP = gamma-L-glutamyl-L-cysteine + ADP + phosphate + H(+). Its function is as follows. ATP-dependent carboxylate-amine ligase which exhibits weak glutamate--cysteine ligase activity. This is Putative glutamate--cysteine ligase 2 from Paraburkholderia phytofirmans (strain DSM 17436 / LMG 22146 / PsJN) (Burkholderia phytofirmans).